A 426-amino-acid chain; its full sequence is Methylamine dehydrogenase heavy chain (426 aa).

The N-terminal stretch at 1–31 (MASARESTPRYLTLIGATLACSALALGAAQA) is a signal peptide. Residues 32-64 (QTEPAEPEAPAETAAADAAGQTEGQRGAAEAAA) form a disordered region. An intrachain disulfide couples Cys-221 to Cys-236.

This sequence belongs to the aromatic amine dehydrogenase heavy chain family. In terms of assembly, tetramer of two light and two heavy chains.

It is found in the periplasm. It carries out the reaction 2 oxidized [amicyanin] + methylamine + H2O = 2 reduced [amicyanin] + formaldehyde + NH4(+) + 2 H(+). Functionally, methylamine dehydrogenase carries out the oxidation of methylamine. Electrons are passed from methylamine dehydrogenase to amicyanin. In Paracoccus versutus (Thiobacillus versutus), this protein is Methylamine dehydrogenase heavy chain (mauB).